The chain runs to 372 residues: sn-glycerol-3-phosphate import ATP-binding protein UgpC (372 aa).

One can recognise an ABC transporter domain in the interval 2–233 (LDIKQLVKTY…PASTFVASFI (232 aa)). 35–42 (GPSGCGKS) is an ATP binding site.

Belongs to the ABC transporter superfamily. sn-glycerol-3-phosphate importer (TC 3.A.1.1.3) family. As to quaternary structure, the complex is composed of two ATP-binding proteins (UgpC), two transmembrane proteins (UgpA and UgpE) and a solute-binding protein (UgpB).

Its subcellular location is the cell inner membrane. It carries out the reaction sn-glycerol 3-phosphate(out) + ATP + H2O = sn-glycerol 3-phosphate(in) + ADP + phosphate + H(+). Its function is as follows. Part of the ABC transporter complex UgpBAEC involved in sn-glycerol-3-phosphate (G3P) import. Responsible for energy coupling to the transport system. The chain is sn-glycerol-3-phosphate import ATP-binding protein UgpC from Vibrio cholerae serotype O1 (strain ATCC 39315 / El Tor Inaba N16961).